The sequence spans 554 residues: L-ascorbate oxidase homolog (554 aa).

A signal peptide spans 1–21 (MGSGKVTFVALLLCLSVGVIA). 2 consecutive Plastocyanin-like domains span residues 22–143 (EDPY…LNVH) and 196–296 (SAKV…AIIR). 3 N-linked (GlcNAc...) asparagine glycosylation sites follow: asparagine 31, asparagine 59, and asparagine 108. A disulfide bond links cysteine 101 and cysteine 540. Residues asparagine 332, asparagine 352, and asparagine 423 are each glycosylated (N-linked (GlcNAc...) asparagine). In terms of domain architecture, Plastocyanin-like 3 spans 411-521 (DPSKLTIATN…LGEQLYFSVL (111 aa)).

The protein belongs to the multicopper oxidase family. In terms of tissue distribution, pollen.

The protein resides in the secreted. Its subcellular location is the extracellular space. In terms of biological role, probable oxidoreductase that may be involved in pollen tube growth. In Nicotiana tabacum (Common tobacco), this protein is L-ascorbate oxidase homolog.